The sequence spans 329 residues: N-acetylmuramoyl-L-alanine amidase sle1 (329 aa).

Positions 1 to 26 (MNKKILATAVLGTGALSTLFAHQAEA) are cleaved as a signal peptide. LysM domains lie at 28-71 (TTHT…VLKV), 88-131 (STYT…QLKV), and 152-195 (STYT…KLRV). A Peptidase C51 domain is found at 205–329 (STRSAQSTYY…YQVRNYKFIH (125 aa)).

It is found in the secreted. The protein resides in the cell surface. It carries out the reaction Hydrolyzes the link between N-acetylmuramoyl residues and L-amino acid residues in certain cell-wall glycopeptides.. In terms of biological role, peptidoglycan hydrolase involved in the splitting of the septum during cell division. The polypeptide is N-acetylmuramoyl-L-alanine amidase sle1 (sle1) (Staphylococcus haemolyticus (strain JCSC1435)).